Here is a 394-residue protein sequence, read N- to C-terminus: Phosphopentomutase (394 aa).

The Mn(2+) site is built by aspartate 13, aspartate 286, histidine 291, aspartate 327, histidine 328, and histidine 339.

This sequence belongs to the phosphopentomutase family. The cofactor is Mn(2+).

The protein resides in the cytoplasm. The enzyme catalyses 2-deoxy-alpha-D-ribose 1-phosphate = 2-deoxy-D-ribose 5-phosphate. It carries out the reaction alpha-D-ribose 1-phosphate = D-ribose 5-phosphate. It functions in the pathway carbohydrate degradation; 2-deoxy-D-ribose 1-phosphate degradation; D-glyceraldehyde 3-phosphate and acetaldehyde from 2-deoxy-alpha-D-ribose 1-phosphate: step 1/2. Isomerase that catalyzes the conversion of deoxy-ribose 1-phosphate (dRib-1-P) and ribose 1-phosphate (Rib-1-P) to deoxy-ribose 5-phosphate (dRib-5-P) and ribose 5-phosphate (Rib-5-P), respectively. This is Phosphopentomutase from Bacillus cereus (strain B4264).